Consider the following 316-residue polypeptide: Ribosomal RNA small subunit methyltransferase H (316 aa).

Residues 35–37, Asp-55, Phe-84, Asp-105, and Gln-112 each bind S-adenosyl-L-methionine; that span reads SGH.

This sequence belongs to the methyltransferase superfamily. RsmH family.

It localises to the cytoplasm. It carries out the reaction cytidine(1402) in 16S rRNA + S-adenosyl-L-methionine = N(4)-methylcytidine(1402) in 16S rRNA + S-adenosyl-L-homocysteine + H(+). Specifically methylates the N4 position of cytidine in position 1402 (C1402) of 16S rRNA. The chain is Ribosomal RNA small subunit methyltransferase H from Streptococcus dysgalactiae subsp. equisimilis (strain GGS_124).